The chain runs to 608 residues: Elongation factor 4 (608 aa).

The region spanning K11 to S193 is the tr-type G domain. GTP is bound by residues D23–T28 and N140–D143.

It belongs to the TRAFAC class translation factor GTPase superfamily. Classic translation factor GTPase family. LepA subfamily.

It localises to the cell membrane. The catalysed reaction is GTP + H2O = GDP + phosphate + H(+). In terms of biological role, required for accurate and efficient protein synthesis under certain stress conditions. May act as a fidelity factor of the translation reaction, by catalyzing a one-codon backward translocation of tRNAs on improperly translocated ribosomes. Back-translocation proceeds from a post-translocation (POST) complex to a pre-translocation (PRE) complex, thus giving elongation factor G a second chance to translocate the tRNAs correctly. Binds to ribosomes in a GTP-dependent manner. The protein is Elongation factor 4 of Listeria monocytogenes serotype 4b (strain CLIP80459).